The primary structure comprises 340 residues: DNA-directed RNA polymerase subunit alpha (340 aa).

Residues 1 to 236 (MLSLSKNWNT…EQLQLFISFE (236 aa)) form an alpha N-terminal domain (alpha-NTD) region. The tract at residues 246 to 340 (TDALPFSPYL…LSNRYEDSYN (95 aa)) is alpha C-terminal domain (alpha-CTD).

Belongs to the RNA polymerase alpha chain family. As to quaternary structure, homodimer. The RNAP catalytic core consists of 2 alpha, 1 beta, 1 beta' and 1 omega subunit. When a sigma factor is associated with the core the holoenzyme is formed, which can initiate transcription.

The catalysed reaction is RNA(n) + a ribonucleoside 5'-triphosphate = RNA(n+1) + diphosphate. In terms of biological role, DNA-dependent RNA polymerase catalyzes the transcription of DNA into RNA using the four ribonucleoside triphosphates as substrates. The polypeptide is DNA-directed RNA polymerase subunit alpha (Rickettsia felis (strain ATCC VR-1525 / URRWXCal2) (Rickettsia azadi)).